The following is a 619-amino-acid chain: Translation initiation factor eIF2B subunit delta (619 aa).

The span at Gly21 to Pro32 shows a compositional bias: basic and acidic residues. The disordered stretch occupies residues Gly21–Lys251. The span at Thr42 to Pro56 shows a compositional bias: low complexity. Over residues Leu57 to Ser84 the composition is skewed to polar residues. The span at Asn85–Asn98 shows a compositional bias: low complexity. Polar residues predominate over residues Ala99–Asn125. The segment covering Ser136 to Gln199 has biased composition (low complexity). A compositionally biased stretch (basic and acidic residues) spans Gln200–Gln244.

Belongs to the eIF-2B alpha/beta/delta subunits family. As to quaternary structure, component of the translation initiation factor 2B (eIF2B) complex which is a heterodecamer of two sets of five different subunits: alpha, beta, gamma, delta and epsilon. Subunits alpha, beta and delta comprise a regulatory subcomplex and subunits epsilon and gamma comprise a catalytic subcomplex. Within the complex, the hexameric regulatory complex resides at the center, with the two heterodimeric catalytic subcomplexes bound on opposite sides.

It is found in the cytoplasm. It localises to the cytosol. In terms of biological role, acts as a component of the translation initiation factor 2B (eIF2B) complex, which catalyzes the exchange of GDP for GTP on eukaryotic initiation factor 2 (eIF2) gamma subunit. Its guanine nucleotide exchange factor activity is repressed when bound to eIF2 complex phosphorylated on the alpha subunit, thereby limiting the amount of methionyl-initiator methionine tRNA available to the ribosome and consequently global translation is repressed. This Dictyostelium discoideum (Social amoeba) protein is Translation initiation factor eIF2B subunit delta (eif2b4).